The primary structure comprises 156 residues: Transcriptional repressor NrdR (156 aa).

A zinc finger lies at 3-34 (CPKCNSTHSRVVDSRHADEANAIRRRRECENC). One can recognise an ATP-cone domain in the interval 49–139 (LIVVKKDGTR…VYKEFKDVDQ (91 aa)).

Belongs to the NrdR family. Requires Zn(2+) as cofactor.

Its function is as follows. Negatively regulates transcription of bacterial ribonucleotide reductase nrd genes and operons by binding to NrdR-boxes. The chain is Transcriptional repressor NrdR from Staphylococcus epidermidis (strain ATCC 35984 / DSM 28319 / BCRC 17069 / CCUG 31568 / BM 3577 / RP62A).